The following is a 58-amino-acid chain: Light-harvesting protein B-870 alpha chain (58 aa).

Residues 1 to 15 lie on the Cytoplasmic side of the membrane; it reads MSKFYKIWLVFDPRR. Residues 16–36 traverse the membrane as a helical segment; that stretch reads VFVAQGVFLFLLAVLIHLILL. Residue H32 participates in a bacteriochlorophyll binding. The Periplasmic portion of the chain corresponds to 37-58; it reads STPAFNWLTVATAKHGYVAAAQ.

The protein belongs to the antenna complex alpha subunit family. In terms of assembly, the core complex is formed by different alpha and beta chains, binding bacteriochlorophyll molecules, and arranged most probably in tetrameric structures disposed around the reaction center. The non-pigmented gamma chains may constitute additional components.

The protein localises to the cell inner membrane. Functionally, antenna complexes are light-harvesting systems, which transfer the excitation energy to the reaction centers. The polypeptide is Light-harvesting protein B-870 alpha chain (pufA) (Rhodobacter capsulatus (Rhodopseudomonas capsulata)).